The primary structure comprises 200 residues: dITP/XTP pyrophosphatase (200 aa).

Thr-19 to Lys-24 lines the substrate pocket. 2 residues coordinate Mg(2+): Glu-49 and Asp-78. Asp-78 acts as the Proton acceptor in catalysis. Substrate contacts are provided by residues Ser-79, Phe-158–Asp-161, Lys-181, and His-186–Arg-187.

The protein belongs to the HAM1 NTPase family. Homodimer. Mg(2+) is required as a cofactor.

It catalyses the reaction XTP + H2O = XMP + diphosphate + H(+). It carries out the reaction dITP + H2O = dIMP + diphosphate + H(+). The catalysed reaction is ITP + H2O = IMP + diphosphate + H(+). Its function is as follows. Pyrophosphatase that catalyzes the hydrolysis of nucleoside triphosphates to their monophosphate derivatives, with a high preference for the non-canonical purine nucleotides XTP (xanthosine triphosphate), dITP (deoxyinosine triphosphate) and ITP. Seems to function as a house-cleaning enzyme that removes non-canonical purine nucleotides from the nucleotide pool, thus preventing their incorporation into DNA/RNA and avoiding chromosomal lesions. The polypeptide is dITP/XTP pyrophosphatase (Deinococcus radiodurans (strain ATCC 13939 / DSM 20539 / JCM 16871 / CCUG 27074 / LMG 4051 / NBRC 15346 / NCIMB 9279 / VKM B-1422 / R1)).